A 160-amino-acid chain; its full sequence is NADH-quinone oxidoreductase subunit I (160 aa).

2 consecutive 4Fe-4S ferredoxin-type domains span residues leucine 51–alanine 81 and valine 91–asparagine 120. [4Fe-4S] cluster contacts are provided by cysteine 61, cysteine 64, cysteine 67, cysteine 71, cysteine 100, cysteine 103, cysteine 106, and cysteine 110.

The protein belongs to the complex I 23 kDa subunit family. NDH-1 is composed of 14 different subunits. Subunits NuoA, H, J, K, L, M, N constitute the membrane sector of the complex. Requires [4Fe-4S] cluster as cofactor.

It is found in the cell inner membrane. The enzyme catalyses a quinone + NADH + 5 H(+)(in) = a quinol + NAD(+) + 4 H(+)(out). In terms of biological role, NDH-1 shuttles electrons from NADH, via FMN and iron-sulfur (Fe-S) centers, to quinones in the respiratory chain. The immediate electron acceptor for the enzyme in this species is believed to be ubiquinone. Couples the redox reaction to proton translocation (for every two electrons transferred, four hydrogen ions are translocated across the cytoplasmic membrane), and thus conserves the redox energy in a proton gradient. This is NADH-quinone oxidoreductase subunit I from Anaplasma marginale (strain St. Maries).